The primary structure comprises 496 residues: Ribose import ATP-binding protein RbsA (496 aa).

2 consecutive ABC transporter domains span residues 5–242 (IEMK…VGRS) and 252–496 (SQIG…TGGE). 37–44 (GENGAGKS) is an ATP binding site.

This sequence belongs to the ABC transporter superfamily. Ribose importer (TC 3.A.1.2.1) family. As to quaternary structure, the complex is composed of an ATP-binding protein (RbsA), two transmembrane proteins (RbsC) and a solute-binding protein (RbsB).

The protein resides in the cell membrane. The enzyme catalyses D-ribose(out) + ATP + H2O = D-ribose(in) + ADP + phosphate + H(+). Part of the ABC transporter complex RbsABC involved in ribose import. Responsible for energy coupling to the transport system. This is Ribose import ATP-binding protein RbsA from Bacillus cereus (strain ATCC 14579 / DSM 31 / CCUG 7414 / JCM 2152 / NBRC 15305 / NCIMB 9373 / NCTC 2599 / NRRL B-3711).